A 197-amino-acid polypeptide reads, in one-letter code: dITP/XTP pyrophosphatase (197 aa).

8–13 (TGNQGK) is a substrate binding site. Catalysis depends on Asp-69, which acts as the Proton acceptor. Asp-69 provides a ligand contact to Mg(2+). Substrate contacts are provided by residues Ser-70, 154–157 (FGYD), Lys-177, and 182–183 (HR).

It belongs to the HAM1 NTPase family. In terms of assembly, homodimer. Mg(2+) is required as a cofactor.

The enzyme catalyses XTP + H2O = XMP + diphosphate + H(+). It catalyses the reaction dITP + H2O = dIMP + diphosphate + H(+). It carries out the reaction ITP + H2O = IMP + diphosphate + H(+). In terms of biological role, pyrophosphatase that catalyzes the hydrolysis of nucleoside triphosphates to their monophosphate derivatives, with a high preference for the non-canonical purine nucleotides XTP (xanthosine triphosphate), dITP (deoxyinosine triphosphate) and ITP. Seems to function as a house-cleaning enzyme that removes non-canonical purine nucleotides from the nucleotide pool, thus preventing their incorporation into DNA/RNA and avoiding chromosomal lesions. This is dITP/XTP pyrophosphatase from Photobacterium profundum (strain SS9).